Reading from the N-terminus, the 1072-residue chain is Zn(2)-C6 fungal-type transcription factor FTF2 (1072 aa).

The segment at residues 179-206 is a DNA-binding region (zn(2)-C6 fungal-type); it reads CIACRRKKIRCSGEKPACKHCLRSRIPC.

It localises to the nucleus. Its function is as follows. Zn(2)-C6 fungal-type transcription factor that has a role in conidia production and also in plant colonization. Acts as a negative regulator of the production of macroconidia and is required for full virulence and the positive regulation of SIX effectors. In addition, FTF2 is also involved in the regulation of class II hydrophobins FOXG_02746 and FOXG_02748 likely required for plant colonization. The polypeptide is Zn(2)-C6 fungal-type transcription factor FTF2 (Fusarium oxysporum f. sp. lycopersici (strain 4287 / CBS 123668 / FGSC 9935 / NRRL 34936) (Fusarium vascular wilt of tomato)).